Reading from the N-terminus, the 169-residue chain is Transmembrane protein 89 (169 aa).

A signal peptide spans methionine 1–glycine 22. At tryptophan 23–arginine 75 the chain is on the extracellular side. Residues isoleucine 76–isoleucine 96 traverse the membrane as a helical segment. The Cytoplasmic portion of the chain corresponds to valine 97–glycine 169.

It is found in the membrane. The sequence is that of Transmembrane protein 89 (Tmem89) from Mus musculus (Mouse).